Here is a 488-residue protein sequence, read N- to C-terminus: Regulatory protein ViaA (488 aa).

This sequence belongs to the ViaA family. In terms of assembly, homodimer. Interacts with RavA.

The protein resides in the cytoplasm. Functionally, component of the RavA-ViaA chaperone complex, which may act on the membrane to optimize the function of some of the respiratory chains. ViaA stimulates the ATPase activity of RavA. The sequence is that of Regulatory protein ViaA from Yersinia pseudotuberculosis serotype O:1b (strain IP 31758).